Here is a 486-residue protein sequence, read N- to C-terminus: Pup--protein ligase (486 aa).

Glu33 contributes to the Mg(2+) binding site. An ATP-binding site is contributed by Arg76. Tyr78 contributes to the Mg(2+) binding site. Asp80 (proton acceptor) is an active-site residue. Residue Glu86 coordinates Mg(2+). Positions 89 and 451 each coordinate ATP.

Belongs to the Pup ligase/Pup deamidase family. Pup-conjugating enzyme subfamily.

The catalysed reaction is ATP + [prokaryotic ubiquitin-like protein]-L-glutamate + [protein]-L-lysine = ADP + phosphate + N(6)-([prokaryotic ubiquitin-like protein]-gamma-L-glutamyl)-[protein]-L-lysine.. It participates in protein degradation; proteasomal Pup-dependent pathway. It functions in the pathway protein modification; protein pupylation. In terms of biological role, catalyzes the covalent attachment of the prokaryotic ubiquitin-like protein modifier Pup to the proteasomal substrate proteins, thereby targeting them for proteasomal degradation. This tagging system is termed pupylation. The ligation reaction involves the side-chain carboxylate of the C-terminal glutamate of Pup and the side-chain amino group of a substrate lysine. The chain is Pup--protein ligase from Bifidobacterium longum (strain DJO10A).